Consider the following 193-residue polypeptide: Peptidyl-tRNA hydrolase (193 aa).

Tyr-14 provides a ligand contact to tRNA. The active-site Proton acceptor is the His-19. The tRNA site is built by Phe-64, Asn-66, and Asn-112.

The protein belongs to the PTH family. As to quaternary structure, monomer.

It is found in the cytoplasm. It carries out the reaction an N-acyl-L-alpha-aminoacyl-tRNA + H2O = an N-acyl-L-amino acid + a tRNA + H(+). In terms of biological role, hydrolyzes ribosome-free peptidyl-tRNAs (with 1 or more amino acids incorporated), which drop off the ribosome during protein synthesis, or as a result of ribosome stalling. Its function is as follows. Catalyzes the release of premature peptidyl moieties from peptidyl-tRNA molecules trapped in stalled 50S ribosomal subunits, and thus maintains levels of free tRNAs and 50S ribosomes. The chain is Peptidyl-tRNA hydrolase from Bartonella quintana (strain Toulouse) (Rochalimaea quintana).